Reading from the N-terminus, the 440-residue chain is GTPase Der (440 aa).

2 EngA-type G domains span residues 3-167 (PIIA…PYDR) and 176-351 (TRIA…EQYC). GTP contacts are provided by residues 9–16 (GRPNVGKS), 56–60 (DTGGF), 119–122 (NKVD), 182–189 (GRPNVGKS), 229–233 (DTAGI), and 294–297 (NKWD). The KH-like domain maps to 352–436 (KRVTTGELNR…PLKLIFRGRD (85 aa)).

It belongs to the TRAFAC class TrmE-Era-EngA-EngB-Septin-like GTPase superfamily. EngA (Der) GTPase family. In terms of assembly, associates with the 50S ribosomal subunit.

Functionally, GTPase that plays an essential role in the late steps of ribosome biogenesis. This chain is GTPase Der, found in Citrifermentans bemidjiense (strain ATCC BAA-1014 / DSM 16622 / JCM 12645 / Bem) (Geobacter bemidjiensis).